The primary structure comprises 66 residues: Phylloseptin-Az3 (66 aa).

An N-terminal signal peptide occupies residues 1-22; the sequence is MAFLKKSLFLVLFLGLVSLSIC. A propeptide spanning residues 23–44 is cleaved from the precursor; sequence EEEKRETEEEEYNQEDDDKSEE. F65 carries the post-translational modification Phenylalanine amide.

As to expression, expressed by the skin glands.

The protein resides in the secreted. Has antimicrobial activity. In Pithecopus azureus (Orange-legged monkey tree frog), this protein is Phylloseptin-Az3.